The chain runs to 160 residues: Transcription elongation factor GreA 2 (160 aa).

The stretch at 9 to 73 forms a coiled coil; that stretch reads MTEEGKVKLE…RIKTVEHMLQ (65 aa).

The protein belongs to the GreA/GreB family.

In terms of biological role, necessary for efficient RNA polymerase transcription elongation past template-encoded arresting sites. The arresting sites in DNA have the property of trapping a certain fraction of elongating RNA polymerases that pass through, resulting in locked ternary complexes. Cleavage of the nascent transcript by cleavage factors such as GreA or GreB allows the resumption of elongation from the new 3'terminus. GreA releases sequences of 2 to 3 nucleotides. The polypeptide is Transcription elongation factor GreA 2 (Lactiplantibacillus plantarum (strain ATCC BAA-793 / NCIMB 8826 / WCFS1) (Lactobacillus plantarum)).